The following is a 268-amino-acid chain: Putative pyruvate, phosphate dikinase regulatory protein (268 aa).

147–154 (GLSRTSKT) serves as a coordination point for ADP.

The protein belongs to the pyruvate, phosphate/water dikinase regulatory protein family. PDRP subfamily.

The enzyme catalyses N(tele)-phospho-L-histidyl/L-threonyl-[pyruvate, phosphate dikinase] + ADP = N(tele)-phospho-L-histidyl/O-phospho-L-threonyl-[pyruvate, phosphate dikinase] + AMP + H(+). The catalysed reaction is N(tele)-phospho-L-histidyl/O-phospho-L-threonyl-[pyruvate, phosphate dikinase] + phosphate + H(+) = N(tele)-phospho-L-histidyl/L-threonyl-[pyruvate, phosphate dikinase] + diphosphate. Functionally, bifunctional serine/threonine kinase and phosphorylase involved in the regulation of the pyruvate, phosphate dikinase (PPDK) by catalyzing its phosphorylation/dephosphorylation. The protein is Putative pyruvate, phosphate dikinase regulatory protein of Clostridium beijerinckii (strain ATCC 51743 / NCIMB 8052) (Clostridium acetobutylicum).